Reading from the N-terminus, the 215-residue chain is Large ribosomal subunit protein uL3 (215 aa).

Glutamine 151 is subject to N5-methylglutamine.

It belongs to the universal ribosomal protein uL3 family. As to quaternary structure, part of the 50S ribosomal subunit. Forms a cluster with proteins L14 and L19. Post-translationally, methylated by PrmB.

Its function is as follows. One of the primary rRNA binding proteins, it binds directly near the 3'-end of the 23S rRNA, where it nucleates assembly of the 50S subunit. This is Large ribosomal subunit protein uL3 from Rickettsia bellii (strain OSU 85-389).